Consider the following 133-residue polypeptide: Small ribosomal subunit protein uS8 (133 aa).

Positions 1–28 (MANHDPISDMLTRIRNASEKRHEKTKVP) are disordered. Residues 16 to 26 (NASEKRHEKTK) show a composition bias toward basic and acidic residues.

This sequence belongs to the universal ribosomal protein uS8 family. As to quaternary structure, part of the 30S ribosomal subunit. Contacts proteins S5 and S12.

One of the primary rRNA binding proteins, it binds directly to 16S rRNA central domain where it helps coordinate assembly of the platform of the 30S subunit. In Prochlorococcus marinus (strain NATL1A), this protein is Small ribosomal subunit protein uS8.